We begin with the raw amino-acid sequence, 340 residues long: MHTDLDTDMDMDTETTALCPSGSRRASPPGTPTPEADATLLKKSEKLLAELDRSGLPSAPGAPRRRGSMPVPYKHQLRRAQAVDELDWPPQASSSGSSDSLGSGEAAPAQKDGIFKVMLVGESGVGKSTLAGTFGGLQGDSAHEPENPEDTYERRIMVDKEEVTLVVYDIWEQGDAGGWLRDHCLQTGDAFLIVFSVTDRRSFSKVPETLLRLRAGRPHHDLPVILVGNKSDLARSREVSLEEGRHLAGTLSCKHIETSAALHHNTRELFEGAVRQIRLRRGRNHAGGQRPDPGSPEGPAPPARRESLTKKAKRFLANLVPRNAKFFKQRSRSCHDLSVL.

Residues 1–13 are compositionally biased toward acidic residues; it reads MHTDLDTDMDMDT. Residues 1–107 form a disordered region; the sequence is MHTDLDTDMD…SDSLGSGEAA (107 aa). Residue Ser27 is modified to Phosphoserine. Residues 40 to 53 show a composition bias toward basic and acidic residues; that stretch reads LLKKSEKLLAELDR. Low complexity predominate over residues 93–104; the sequence is SSSGSSDSLGSG. Residues 121–128, 229–232, and 260–261 contribute to the GTP site; these read GESGVGKS, NKSD, and AA. Residues 283 to 308 are disordered; that stretch reads RNHAGGQRPDPGSPEGPAPPARRESL. Pro residues predominate over residues 293–302; sequence PGSPEGPAPP. The residue at position 295 (Ser295) is a Phosphoserine.

The protein belongs to the small GTPase superfamily. RGK family.

Its subcellular location is the cell membrane. Functionally, binds GTP saturably and exhibits a low intrinsic rate of GTP hydrolysis. This chain is GTP-binding protein REM 2 (REM2), found in Homo sapiens (Human).